Here is an 89-residue protein sequence, read N- to C-terminus: MAHKKGTGSTRNGRDSNAKRLGVKRYGGELVHPGHILVRQRGTKFHPGVNVRIGGDDTLYSVVTGIVTFERYGKWRQKVSVYPAEVAAQ.

The segment at 1 to 24 (MAHKKGTGSTRNGRDSNAKRLGVK) is disordered.

Belongs to the bacterial ribosomal protein bL27 family.

The sequence is that of Large ribosomal subunit protein bL27 from Synechococcus sp. (strain JA-2-3B'a(2-13)) (Cyanobacteria bacterium Yellowstone B-Prime).